The chain runs to 208 residues: Protein-L-isoaspartate O-methyltransferase (208 aa).

Residue Ser59 is part of the active site.

Belongs to the methyltransferase superfamily. L-isoaspartyl/D-aspartyl protein methyltransferase family.

The protein resides in the cytoplasm. It carries out the reaction [protein]-L-isoaspartate + S-adenosyl-L-methionine = [protein]-L-isoaspartate alpha-methyl ester + S-adenosyl-L-homocysteine. In terms of biological role, catalyzes the methyl esterification of L-isoaspartyl residues in peptides and proteins that result from spontaneous decomposition of normal L-aspartyl and L-asparaginyl residues. It plays a role in the repair and/or degradation of damaged proteins. The polypeptide is Protein-L-isoaspartate O-methyltransferase (Escherichia coli (strain K12 / MC4100 / BW2952)).